An 88-amino-acid polypeptide reads, in one-letter code: Large ribosomal subunit protein bL27 (88 aa).

Positions 1–21 are disordered; it reads MAHKKGTGSTRNGRDSRAQRL.

Belongs to the bacterial ribosomal protein bL27 family.

In Picosynechococcus sp. (strain ATCC 27264 / PCC 7002 / PR-6) (Agmenellum quadruplicatum), this protein is Large ribosomal subunit protein bL27.